The sequence spans 115 residues: Thrombospondin type-1 domain-containing protein 8 (115 aa).

The first 21 residues, Met1 to Pro21, serve as a signal peptide directing secretion. Positions Asp53–Pro104 constitute a TSP type-1 domain.

In Homo sapiens (Human), this protein is Thrombospondin type-1 domain-containing protein 8.